We begin with the raw amino-acid sequence, 327 residues long: uncharacterized protein (327 aa).

The 68-residue stretch at 12–79 (KRLDEFLAKE…LKKELDLEIE (68 aa)) folds into the S4 RNA-binding domain. Residue Asp136 is part of the active site.

It belongs to the pseudouridine synthase RluA family.

The catalysed reaction is a uridine in RNA = a pseudouridine in RNA. This is an uncharacterized protein from Helicobacter pylori (strain ATCC 700392 / 26695) (Campylobacter pylori).